Consider the following 376-residue polypeptide: MKHNRPNGTGKAVSGFKQIIRRLLLLLNKKRRKQLVIILKRITQVYGINLVFYVKKWKLKKLQGENIQINDIMPWLRESTILVLLNILYPTLMKFPFLKNHYIHWSSIVGISLMLTKGEVPSWIIAHFLVEAIASKLKIAKLTQWLKKKNFSQGTLIKFQQILVCLAIIVLFAKLDRSSLPFRVLFDHRPFLIDFFTINAIFTVLAVYHRTLKFFFTSGTKSNKNVGGHEVRNFSQYLGVKNHNDWPISSSNLKHVMDRLNEIHEVTIDDNYANINEKIINSYFTKGFFPSLKWTILRQCIEYLFVTKRRRLMGNKLRCIVMLLTFTFVDPTSKMKISPFFAKFFAKSLVNVYLKKYWHCNFGKYILFFLFQLSIM.

2 consecutive transmembrane segments (helical) span residues 153 to 173 and 188 to 208; these read QGTLIKFQQILVCLAIIVLFA and HRPFLIDFFTINAIFTVLAVY.

The protein resides in the membrane. This is an uncharacterized protein from Saccharomyces cerevisiae (strain ATCC 204508 / S288c) (Baker's yeast).